The primary structure comprises 450 residues: Exodeoxyribonuclease 7 large subunit (450 aa).

This sequence belongs to the XseA family. Heterooligomer composed of large and small subunits.

The protein localises to the cytoplasm. It catalyses the reaction Exonucleolytic cleavage in either 5'- to 3'- or 3'- to 5'-direction to yield nucleoside 5'-phosphates.. Its function is as follows. Bidirectionally degrades single-stranded DNA into large acid-insoluble oligonucleotides, which are then degraded further into small acid-soluble oligonucleotides. The chain is Exodeoxyribonuclease 7 large subunit from Shewanella frigidimarina (strain NCIMB 400).